A 446-amino-acid chain; its full sequence is Argininosuccinate synthase (446 aa).

ATP is bound by residues 17 to 25 and alanine 43; that span reads AFSGGLDTS. Tyrosine 99 is a binding site for L-citrulline. Residues glycine 129 and threonine 131 each contribute to the ATP site. 3 residues coordinate L-aspartate: threonine 131, asparagine 135, and aspartate 136. Residue asparagine 135 participates in L-citrulline binding. Aspartate 136 provides a ligand contact to ATP. L-citrulline contacts are provided by arginine 139 and serine 192. Residue aspartate 194 coordinates ATP. Residues threonine 201, glutamate 203, and glutamate 280 each contribute to the L-citrulline site.

The protein belongs to the argininosuccinate synthase family. Type 2 subfamily. Homotetramer.

The protein resides in the cytoplasm. The enzyme catalyses L-citrulline + L-aspartate + ATP = 2-(N(omega)-L-arginino)succinate + AMP + diphosphate + H(+). It functions in the pathway amino-acid biosynthesis; L-arginine biosynthesis; L-arginine from L-ornithine and carbamoyl phosphate: step 2/3. This chain is Argininosuccinate synthase, found in Burkholderia mallei (strain NCTC 10247).